The sequence spans 467 residues: Cytochrome c-552 (467 aa).

Positions 1 to 27 (MMKKMTGKSFALSALVAASFMAAGAMA) are cleaved as a signal peptide. Residue histidine 87 coordinates heme c. Heme contacts are provided by cysteine 115, cysteine 118, and lysine 119. Heme c-binding residues include cysteine 153, cysteine 156, histidine 157, cysteine 195, cysteine 198, and histidine 199. Ca(2+) contacts are provided by glutamate 201, tyrosine 202, lysine 250, and glutamine 252. Tyrosine 202 contacts substrate. Substrate is bound at residue histidine 253. Histidine 264, cysteine 271, cysteine 274, histidine 275, histidine 290, cysteine 303, cysteine 306, histidine 307, and histidine 382 together coordinate heme c.

Belongs to the cytochrome c-552 family. The cofactor is Ca(2+). It depends on heme c as a cofactor.

The protein resides in the periplasm. The catalysed reaction is 6 Fe(III)-[cytochrome c] + NH4(+) + 2 H2O = 6 Fe(II)-[cytochrome c] + nitrite + 8 H(+). The protein operates within nitrogen metabolism; nitrate reduction (assimilation). Its function is as follows. Catalyzes the reduction of nitrite to ammonia, consuming six electrons in the process. The sequence is that of Cytochrome c-552 from Shewanella sp. (strain MR-4).